A 258-amino-acid polypeptide reads, in one-letter code: 2-succinyl-6-hydroxy-2,4-cyclohexadiene-1-carboxylate synthase (258 aa).

This sequence belongs to the AB hydrolase superfamily. MenH family. Monomer.

The catalysed reaction is 5-enolpyruvoyl-6-hydroxy-2-succinyl-cyclohex-3-ene-1-carboxylate = (1R,6R)-6-hydroxy-2-succinyl-cyclohexa-2,4-diene-1-carboxylate + pyruvate. Its pathway is quinol/quinone metabolism; 1,4-dihydroxy-2-naphthoate biosynthesis; 1,4-dihydroxy-2-naphthoate from chorismate: step 3/7. It participates in quinol/quinone metabolism; menaquinone biosynthesis. In terms of biological role, catalyzes a proton abstraction reaction that results in 2,5-elimination of pyruvate from 2-succinyl-5-enolpyruvyl-6-hydroxy-3-cyclohexene-1-carboxylate (SEPHCHC) and the formation of 2-succinyl-6-hydroxy-2,4-cyclohexadiene-1-carboxylate (SHCHC). In Enterobacter sp. (strain 638), this protein is 2-succinyl-6-hydroxy-2,4-cyclohexadiene-1-carboxylate synthase.